Reading from the N-terminus, the 499-residue chain is Cytosol aminopeptidase (499 aa).

Positions 267 and 272 each coordinate Mn(2+). Lysine 279 is an active-site residue. Mn(2+) contacts are provided by aspartate 290, aspartate 349, and glutamate 351. Arginine 353 is a catalytic residue.

This sequence belongs to the peptidase M17 family. Mn(2+) serves as cofactor.

It is found in the cytoplasm. It catalyses the reaction Release of an N-terminal amino acid, Xaa-|-Yaa-, in which Xaa is preferably Leu, but may be other amino acids including Pro although not Arg or Lys, and Yaa may be Pro. Amino acid amides and methyl esters are also readily hydrolyzed, but rates on arylamides are exceedingly low.. The enzyme catalyses Release of an N-terminal amino acid, preferentially leucine, but not glutamic or aspartic acids.. Presumably involved in the processing and regular turnover of intracellular proteins. Catalyzes the removal of unsubstituted N-terminal amino acids from various peptides. The protein is Cytosol aminopeptidase (pepA) of Buchnera aphidicola subsp. Acyrthosiphon pisum (strain APS) (Acyrthosiphon pisum symbiotic bacterium).